A 948-amino-acid polypeptide reads, in one-letter code: Autophagy-related protein 9 (948 aa).

3 disordered regions span residues 1 to 20 (MMSS…PSVY), 46 to 104 (QQEQ…PRWM), and 130 to 193 (HHED…TGQH). The Cytoplasmic portion of the chain corresponds to 1–230 (MMSSNILSRF…DVYVYFLGNG (230 aa)). Polar residues predominate over residues 66–79 (EIVSPSTALLNQAR). Basic and acidic residues predominate over residues 163 to 172 (TEARWNERGV). Residues 231–251 (IWSILLTRVLNLLTFAFVVGF) traverse the membrane as a helical segment. The Lumenal segment spans residues 252-287 (STFLTNCIDYPKVRRSKTLNDILVPQCTANMSGSST). The helical transmembrane segment at 288–308 (FLLWLFSFFWIGKLFQYLLDI) threads the bilayer. Residues 309–454 (RRLKHLHDFY…RALSDGLRRR (146 aa)) are Cytoplasmic-facing. An intramembrane segment occupies 455-475 (FIFAGVMNIFVAPFIVVYFMM). Over 476-543 (HYFFRYFNEF…PKDKTVQVAR (68 aa)) the chain is Cytoplasmic. A helical membrane pass occupies residues 544-564 (FVAFISGALASVLALASVIDP). The Lumenal segment spans residues 565–576 (ELFLGFEITHDR). The chain crosses the membrane as a helical span at residues 577–597 (TVLFYLGIFGTVWAFARGLAP). The Cytoplasmic portion of the chain corresponds to 598 to 643 (EETDVFDPEYALLELIDFTHYFPSGWKGRLHSDDVRKEFAILYQMK). The stretch at 644–664 (IVIFLEEILSMIFTPFVLWFS) is an intramembrane region. At 665-948 (LPKCSDRLID…TEGRRTNVGI (284 aa)) the chain is on the cytoplasmic side. The tract at residues 762-923 (TLGSPTAGGF…EGENIDAIAG (162 aa)) is disordered. Positions 844 to 853 (QRSRLGRSHH) are enriched in basic residues. The segment covering 878–892 (SGARTGTSSAGAGTS) has biased composition (low complexity). Acidic residues predominate over residues 907–917 (NDEDEGDEGEN).

The protein belongs to the ATG9 family. As to quaternary structure, homotrimer; forms a homotrimer with a central pore that forms a path between the two membrane leaflets. Phosphorylated by atg1. Atg1 phosphorylation is required for preautophagosome elongation.

The protein resides in the preautophagosomal structure membrane. It is found in the cytoplasmic vesicle membrane. The protein localises to the golgi apparatus membrane. It localises to the endoplasmic reticulum membrane. The catalysed reaction is a 1,2-diacyl-sn-glycero-3-phosphocholine(in) = a 1,2-diacyl-sn-glycero-3-phosphocholine(out). It carries out the reaction a 1,2-diacyl-sn-glycero-3-phospho-L-serine(in) = a 1,2-diacyl-sn-glycero-3-phospho-L-serine(out). The enzyme catalyses a 1,2-diacyl-sn-glycero-3-phosphoethanolamine(in) = a 1,2-diacyl-sn-glycero-3-phosphoethanolamine(out). It catalyses the reaction a 1,2-diacyl-sn-glycero-3-phospho-(1D-myo-inositol-3-phosphate)(in) = a 1,2-diacyl-sn-glycero-3-phospho-(1D-myo-inositol-3-phosphate)(out). Functionally, phospholipid scramblase involved in autophagy and cytoplasm to vacuole transport (Cvt) vesicle formation. Cycles between the preautophagosomal structure/phagophore assembly site (PAS) and the cytoplasmic vesicle pool and supplies membrane for the growing autophagosome. Lipid scramblase activity plays a key role in preautophagosomal structure/phagophore assembly by distributing the phospholipids that arrive through atg2 from the cytoplasmic to the luminal leaflet of the bilayer, thereby driving autophagosomal membrane expansion. Required for mitophagy. Also involved in endoplasmic reticulum-specific autophagic process and is essential for the survival of cells subjected to severe ER stress. Different machineries are required for anterograde trafficking to the PAS during either the Cvt pathway or bulk autophagy and for retrograde trafficking. The protein is Autophagy-related protein 9 (atg9) of Penicillium rubens (strain ATCC 28089 / DSM 1075 / NRRL 1951 / Wisconsin 54-1255) (Penicillium chrysogenum).